Consider the following 238-residue polypeptide: Urease accessory protein UreF (238 aa).

Belongs to the UreF family. UreD, UreF and UreG form a complex that acts as a GTP-hydrolysis-dependent molecular chaperone, activating the urease apoprotein by helping to assemble the nickel containing metallocenter of UreC. The UreE protein probably delivers the nickel.

It is found in the cytoplasm. Its function is as follows. Required for maturation of urease via the functional incorporation of the urease nickel metallocenter. The sequence is that of Urease accessory protein UreF from Rhodopseudomonas palustris (strain BisA53).